The sequence spans 1609 residues: Probable cation-transporting ATPase I (1609 aa).

The next 10 helical transmembrane spans lie at 30–50, 176–196, 238–258, 357–377, 641–661, 673–693, 778–798, 921–941, 969–989, and 997–1017; these read GAVN…WPVV, LAIL…SAAV, IALS…GTPL, LIAA…AGAI, VHLA…ASAG, WFSP…VSAS, ILAV…ALLV, LFEG…ATGV, TSKV…LALL, and AVAD…PLVA. Residue aspartate 1053 is the 4-aspartylphosphate intermediate of the active site. Mg(2+) contacts are provided by aspartate 1335 and aspartate 1339. Transmembrane regions (helical) follow at residues 1396–1416 and 1426–1446; these read ILVG…VFGA and LLLV…VTSQ. A disordered region spans residues 1447–1476; the sequence is YEEPGEDEYQTDEEADEARRTHQHEVLTGP. Residues 1449-1462 show a composition bias toward acidic residues; the sequence is EPGEDEYQTDEEAD. Transmembrane regions (helical) follow at residues 1542-1562 and 1573-1593; these read VVAT…TPVI and PIAW…SVLA.

It belongs to the cation transport ATPase (P-type) (TC 3.A.3) family.

The protein localises to the cell membrane. It catalyses the reaction ATP + H2O = ADP + phosphate + H(+). The sequence is that of Probable cation-transporting ATPase I (ctpI) from Mycobacterium leprae (strain TN).